Consider the following 847-residue polypeptide: Glucans biosynthesis glucosyltransferase H (847 aa).

Residues 1-138 (MNKTTEYIDA…KWRTVGTIRR (138 aa)) are Cytoplasmic-facing. Residues 139–156 (YILLILTLAQTVVATWYM) form a helical membrane-spanning segment. At 157–193 (KTILPYQGWALINPMDMVGQDIWVSFMQLLPYMLQTG) the chain is on the periplasmic side. Residues 194 to 216 (ILILFAVLFCWVSAGFWTALMGF) traverse the membrane as a helical segment. The Cytoplasmic segment spans residues 217-511 (LQLLIGRDKY…LVKGMHPVHR (295 aa)). Residues 512–534 (AVFLTGVMSYLSAPLWFMFLALS) form a helical membrane-spanning segment. Residues 535-567 (TALQVVHALTEPQYFLQPRQLFPVWPQWRPELA) lie on the Periplasmic side of the membrane. A helical membrane pass occupies residues 568–590 (IALFASTMVLLFLPKLLSIMLIW). The Cytoplasmic portion of the chain corresponds to 591 to 602 (CKGTKEYGGFWR). A helical transmembrane segment spans residues 603-625 (VTLSLLLEVLFSVLLAPVRMLFH). Residues 626–679 (TVFVVSAFLGWEVVWNSPQRDDDSTPWGEAFMRHGSQLLLGLVWAVGMAWLDLR) lie on the Periplasmic side of the membrane. The helical transmembrane segment at 680-702 (FLFWLAPIVFSLILSPFVSVISS) threads the bilayer. The Cytoplasmic portion of the chain corresponds to 703–847 (RSTVGLRTKR…ALQGRTSSAR (145 aa)).

It belongs to the glycosyltransferase 2 family. OpgH subfamily.

It is found in the cell inner membrane. Its pathway is glycan metabolism; osmoregulated periplasmic glucan (OPG) biosynthesis. Involved in the biosynthesis of osmoregulated periplasmic glucans (OPGs). In Salmonella typhimurium (strain LT2 / SGSC1412 / ATCC 700720), this protein is Glucans biosynthesis glucosyltransferase H.